Here is a 128-residue protein sequence, read N- to C-terminus: Sulfurtransferase TusD (128 aa).

C78 (cysteine persulfide intermediate) is an active-site residue.

The protein belongs to the DsrE/TusD family. As to quaternary structure, heterohexamer, formed by a dimer of trimers. The hexameric TusBCD complex contains 2 copies each of TusB, TusC and TusD. The TusBCD complex interacts with TusE.

The protein localises to the cytoplasm. Part of a sulfur-relay system required for 2-thiolation of 5-methylaminomethyl-2-thiouridine (mnm(5)s(2)U) at tRNA wobble positions. Accepts sulfur from TusA and transfers it in turn to TusE. The sequence is that of Sulfurtransferase TusD from Escherichia coli O17:K52:H18 (strain UMN026 / ExPEC).